The primary structure comprises 163 residues: MTIILGLDPSLSCTGWGVIRAEGSRIAHVANGQVKTDAKAPIADRLHHLHAAIAAVIAAHDPDRAAAEEIFINKNPQSTLKLAQARGCVLAACAAGGLAVNEHAARLVKKSVVGTGGADKAQVQAMLKVLMPGAQVAGADAADALAVAIADANLRSIANLRSP.

Catalysis depends on residues aspartate 8, glutamate 68, and aspartate 140. Aspartate 8, glutamate 68, and aspartate 140 together coordinate Mg(2+).

The protein belongs to the RuvC family. In terms of assembly, homodimer which binds Holliday junction (HJ) DNA. The HJ becomes 2-fold symmetrical on binding to RuvC with unstacked arms; it has a different conformation from HJ DNA in complex with RuvA. In the full resolvosome a probable DNA-RuvA(4)-RuvB(12)-RuvC(2) complex forms which resolves the HJ. Requires Mg(2+) as cofactor.

The protein localises to the cytoplasm. The enzyme catalyses Endonucleolytic cleavage at a junction such as a reciprocal single-stranded crossover between two homologous DNA duplexes (Holliday junction).. In terms of biological role, the RuvA-RuvB-RuvC complex processes Holliday junction (HJ) DNA during genetic recombination and DNA repair. Endonuclease that resolves HJ intermediates. Cleaves cruciform DNA by making single-stranded nicks across the HJ at symmetrical positions within the homologous arms, yielding a 5'-phosphate and a 3'-hydroxyl group; requires a central core of homology in the junction. The consensus cleavage sequence is 5'-(A/T)TT(C/G)-3'. Cleavage occurs on the 3'-side of the TT dinucleotide at the point of strand exchange. HJ branch migration catalyzed by RuvA-RuvB allows RuvC to scan DNA until it finds its consensus sequence, where it cleaves and resolves the cruciform DNA. The polypeptide is Crossover junction endodeoxyribonuclease RuvC (Erythrobacter litoralis (strain HTCC2594)).